The following is a 449-amino-acid chain: Packaging protein 1 (449 aa).

The interval 1 to 77 is disordered; that stretch reads METRGRRPAA…QPAKRGDMLD (77 aa). 171–178 is a binding site for ATP; the sequence is GPTGCGKS. Positions 440–449 are DNA-binding; sequence RAYRARKTPK.

It belongs to the adenoviridae packaging protein 1 family. In terms of assembly, homodimer. Part of a genome packaging complex composed of packaging proteins 1, 2 and 3; this complex specifically binds to the packaging sequence on the left end of viral genomic DNA and performs packaging of the viral genome. Interacts with protein 33K.

The protein resides in the virion. The protein localises to the host nucleus. Its subcellular location is the host nucleoplasm. It is found in the host nucleolus. Component of the packaging machinery which encapsidates the viral DNA into preformed capsids and transcriptional activator of the viral major late promoter (MLP). Binds, along with packaging proteins 2 and 3, to the specific packaging sequence on the left end of viral genomic DNA and displays ATPase activity thereby providing the power stroke of the packaging machinery. The activity of packaging protein IVa2 is stimulated by protein 33K which acts as a terminase. May be the protein that pumps DNA into the capsid powered by ATP hydrolysis. Specifically binds to the 5'-CG-3' nucleotides of the repeats making up the packaging sequence. Component of the DEF-A and DEF-B transcription factors that bind downstream elements of the major late promoter (MLP), and stimulate transcription from the MLP after initiation of viral DNA replication. DEF-A is a heterodimer packaging proteins 1 and 2 and DEF-B is a homodimer of packaging protein 1. The polypeptide is Packaging protein 1 (Homo sapiens (Human)).